The primary structure comprises 35 residues: Beta-theraphotoxin-Hlv1a (35 aa).

Disulfide bonds link C2–C17, C9–C24, and C16–C31.

It belongs to the neurotoxin 10 (Hwtx-1) family. 10 (haplotoxin-1) subfamily. Expressed by the venom gland.

It localises to the secreted. In terms of biological role, spider venom neurotoxin that blocks voltage-gated sodium channel Nav1.3/SCN3A in human (IC(50)=1 uM) and rat (IC(50)=1 uM). This chain is Beta-theraphotoxin-Hlv1a, found in Cyriopagopus lividus (Cobalt blue tarantula).